Reading from the N-terminus, the 265-residue chain is Small ribosomal subunit protein eS1 (265 aa).

Disordered stretches follow at residues Met1 to Asp24 and His240 to Gln265. Over residues His240–Ala253 the composition is skewed to basic and acidic residues.

This sequence belongs to the eukaryotic ribosomal protein eS1 family. Component of the small ribosomal subunit. Mature ribosomes consist of a small (40S) and a large (60S) subunit. The 40S subunit contains about 33 different proteins and 1 molecule of RNA (18S). The 60S subunit contains about 49 different proteins and 3 molecules of RNA (25S, 5.8S and 5S).

It localises to the cytoplasm. The polypeptide is Small ribosomal subunit protein eS1 (Tetrahymena thermophila (strain SB210)).